A 272-amino-acid polypeptide reads, in one-letter code: Tryptophan synthase alpha chain (272 aa).

Residues glutamate 49 and glutamate 60 each act as proton acceptor in the active site.

This sequence belongs to the TrpA family. Tetramer of two alpha and two beta chains.

The enzyme catalyses (1S,2R)-1-C-(indol-3-yl)glycerol 3-phosphate + L-serine = D-glyceraldehyde 3-phosphate + L-tryptophan + H2O. Its pathway is amino-acid biosynthesis; L-tryptophan biosynthesis; L-tryptophan from chorismate: step 5/5. Its function is as follows. The alpha subunit is responsible for the aldol cleavage of indoleglycerol phosphate to indole and glyceraldehyde 3-phosphate. The chain is Tryptophan synthase alpha chain from Legionella pneumophila subsp. pneumophila (strain Philadelphia 1 / ATCC 33152 / DSM 7513).